The following is a 672-amino-acid chain: Probable copper-transporting P-type ATPase B (672 aa).

The span at 1–17 (MEHHSHQEHENHTSHGN) shows a compositional bias: basic and acidic residues. The segment at 1-22 (MEHHSHQEHENHTSHGNHEHHH) is disordered. 6 helical membrane-spanning segments follow: residues 30–50 (FFISLIFAIPIIILSPMMGVK), 55–75 (ISFTGSDWIVLILATILFFYG), 93–113 (GMMTLVALGISVAYIYSLYAF), 125–145 (TMDFFWELATLILIMLLGHWI), 282–302 (GYLFYFAVSIGLISFIVWMLI), and 313–333 (LVTVLVIACPHALGLAIPLVT). Asp365 (4-aspartylphosphate intermediate) is an active-site residue. Residues Asp563 and Asp567 each contribute to the Mg(2+) site. 2 consecutive transmembrane segments (helical) span residues 621–643 (LWWGAGYNVIAVPLAAGILASIG) and 647–669 (SPAVGAILMSLSTIIVAINAFTL).

It belongs to the cation transport ATPase (P-type) (TC 3.A.3) family. Type IB subfamily.

Its subcellular location is the cell membrane. It catalyses the reaction Cu(+)(in) + ATP + H2O = Cu(+)(out) + ADP + phosphate + H(+). Its function is as follows. Involved in copper transport. In Staphylococcus aureus, this protein is Probable copper-transporting P-type ATPase B (copB).